The primary structure comprises 295 residues: Epidermal growth factor-like protein 8 (295 aa).

Positions 1-25 (MGSRAELHTLLGGLSFLLLLMSGQG) are cleaved as a signal peptide. The 79-residue stretch at 34–112 (SQGVCSRQTL…RHPGALTCDE (79 aa)) folds into the EMI domain. Intrachain disulfides connect C38/C97, C65/C71, C96/C110, C115/C125, C119/C131, C133/C142, C149/C160, C156/C169, and C171/C184. N50 carries an N-linked (GlcNAc...) asparagine glycan. An EGF-like 1 domain is found at 111 to 143 (DEAICAKPCQNGGVCVRPDQCECAPGWGGRHCH). An EGF-like 2; calcium-binding domain is found at 145–185 (DVDECRTGVTLCSHRCHNTAGSFTCGCPHGLVLGPDGRTCA). Residues 202 to 233 (VREAGREDRALRREIRELRGRLERLEQWAGQA) are a coiled coil.

Its subcellular location is the secreted. The polypeptide is Epidermal growth factor-like protein 8 (EGFL8) (Sus scrofa (Pig)).